Here is a 101-residue protein sequence, read N- to C-terminus: NAD(P)H-quinone oxidoreductase subunit 4L, chloroplastic (101 aa).

3 helical membrane-spanning segments follow: residues 2–22 (MLEHVLVLSAYLLSIGIYGLI), 32–52 (MCLELILNAVNMNFVTFSDLF), and 61–81 (IFSIFVIAIAAAEAAIGLAIV).

It belongs to the complex I subunit 4L family. NDH is composed of at least 16 different subunits, 5 of which are encoded in the nucleus.

Its subcellular location is the plastid. It is found in the chloroplast thylakoid membrane. The catalysed reaction is a plastoquinone + NADH + (n+1) H(+)(in) = a plastoquinol + NAD(+) + n H(+)(out). It catalyses the reaction a plastoquinone + NADPH + (n+1) H(+)(in) = a plastoquinol + NADP(+) + n H(+)(out). NDH shuttles electrons from NAD(P)H:plastoquinone, via FMN and iron-sulfur (Fe-S) centers, to quinones in the photosynthetic chain and possibly in a chloroplast respiratory chain. The immediate electron acceptor for the enzyme in this species is believed to be plastoquinone. Couples the redox reaction to proton translocation, and thus conserves the redox energy in a proton gradient. This Nandina domestica (Heavenly bamboo) protein is NAD(P)H-quinone oxidoreductase subunit 4L, chloroplastic.